We begin with the raw amino-acid sequence, 255 residues long: Syntaxin-23 (255 aa).

A disordered region spans residues 1–31; it reads MSFQDLEAGRGRSLASSRNINGGGSRQDTTQ. S2 is subject to N-acetylserine. The segment covering 14–31 has biased composition (polar residues); sequence LASSRNINGGGSRQDTTQ. Residues 184–246 form the t-SNARE coiled-coil homology domain; that stretch reads EAVIEEREQG…AQGKSHLVRH (63 aa).

The protein belongs to the syntaxin family. Part of the t-SNARE complex. Interacts with RGS1. As to expression, expressed at higher levels in leaves, flowers and stems than in roots.

Its subcellular location is the membrane. Functionally, may function in the docking or fusion of transport vesicles with the prevacuolar membrane. This Arabidopsis thaliana (Mouse-ear cress) protein is Syntaxin-23 (SYP23).